A 141-amino-acid chain; its full sequence is Large ribosomal subunit protein uL11 (141 aa).

This sequence belongs to the universal ribosomal protein uL11 family. In terms of assembly, part of the ribosomal stalk of the 50S ribosomal subunit. Interacts with L10 and the large rRNA to form the base of the stalk. L10 forms an elongated spine to which L12 dimers bind in a sequential fashion forming a multimeric L10(L12)X complex. One or more lysine residues are methylated.

Forms part of the ribosomal stalk which helps the ribosome interact with GTP-bound translation factors. This is Large ribosomal subunit protein uL11 from Chlamydia pneumoniae (Chlamydophila pneumoniae).